Here is a 353-residue protein sequence, read N- to C-terminus: Guanine nucleotide-binding protein subunit alpha (353 aa).

Residue glycine 2 is the site of N-myristoyl glycine attachment. Residue cysteine 3 is the site of S-palmitoyl cysteine attachment. Residues 33–353 (NEIKMLLLGA…QLHLRECGLL (321 aa)) form the G-alpha domain. The segment at 36-49 (KMLLLGAGESGKST) is G1 motif. The GTP site is built by glutamate 44, serine 45, glycine 46, lysine 47, serine 48, threonine 49, aspartate 150, leucine 175, threonine 181, glycine 203, asparagine 269, lysine 270, aspartate 272, and alanine 325. Serine 48 is a Mg(2+) binding site. Positions 173 to 181 (DILRSRVKT) are G2 motif. Threonine 181 provides a ligand contact to Mg(2+). A G3 motif region spans residues 196-205 (YKLFDVGGQR). The interval 265–272 (ILFLNKID) is G4 motif. Positions 323-328 (TCATDT) are G5 motif.

This sequence belongs to the G-alpha family. G(q) subfamily. G proteins are composed of 3 units; alpha, beta and gamma. The alpha chain contains the guanine nucleotide binding site. The cofactor is Mg(2+).

Functionally, guanine nucleotide-binding proteins (G proteins) are involved as modulators or transducers in various transmembrane signaling systems. This is Guanine nucleotide-binding protein subunit alpha (CGP1) from Coprinellus congregatus (Inky cap fungus).